A 214-amino-acid chain; its full sequence is MSEHETAGEGRFNSIEVRVLGSLIEKQATSPESYPLTLNALVLACNQKTSREPVMNLTQGQVGQALRVLEGQGMTRLQMGSRADRWEHRVDKALELVPAQLVLMGLMFLRGPQTLNELLTRSNRLHDFDDTEQIQHQLERLISRGLALHLPRQAGQREDRYTHALGDPAEIEAILAARQQEGGGRSGGSVSEERIEALEARIAALEARLAELEG.

Belongs to the UPF0502 family.

The protein is UPF0502 protein Pput_3252 of Pseudomonas putida (strain ATCC 700007 / DSM 6899 / JCM 31910 / BCRC 17059 / LMG 24140 / F1).